Here is an 876-residue protein sequence, read N- to C-terminus: SED5-binding protein 2 (876 aa).

Ser-51 carries the post-translational modification Phosphoserine. A zinc finger-like region spans residues Cys-164 to Cys-189. Acidic residues predominate over residues Val-300–Asn-324. The interval Val-300–Glu-326 is disordered.

The protein belongs to the SEC23/SEC24 family. SEC24 subfamily. In terms of assembly, COPII is composed of at least five proteins: the SEC23/24 complex, the SEC13/31 complex and SAR1. Interacts with GRH1.

It is found in the cytoplasm. The protein resides in the golgi apparatus membrane. The protein localises to the endoplasmic reticulum membrane. Functionally, component of the COPII coat, that covers ER-derived vesicles involved in transport from the endoplasmic reticulum to the Golgi apparatus. COPII acts in the cytoplasm to promote the transport of secretory, plasma membrane, and vacuolar proteins from the endoplasmic reticulum to the Golgi complex. This is SED5-binding protein 2 (SFB2) from Saccharomyces cerevisiae (strain ATCC 204508 / S288c) (Baker's yeast).